The chain runs to 255 residues: Geranylgeranylglyceryl phosphate synthase (255 aa).

Mg(2+) contacts are provided by D25 and S54. Sn-glycerol 1-phosphate contacts are provided by residues 173–179 (YLEGGSG), 203–204 (GG), and 225–226 (GT).

The protein belongs to the GGGP/HepGP synthase family. Group II subfamily. Requires Mg(2+) as cofactor.

Its subcellular location is the cytoplasm. The enzyme catalyses sn-glycerol 1-phosphate + (2E,6E,10E)-geranylgeranyl diphosphate = sn-3-O-(geranylgeranyl)glycerol 1-phosphate + diphosphate. It participates in membrane lipid metabolism; glycerophospholipid metabolism. Its function is as follows. Prenyltransferase that catalyzes the transfer of the geranylgeranyl moiety of geranylgeranyl diphosphate (GGPP) to the C3 hydroxyl of sn-glycerol-1-phosphate (G1P). This reaction is the first ether-bond-formation step in the biosynthesis of archaeal membrane lipids. This chain is Geranylgeranylglyceryl phosphate synthase, found in Thermofilum pendens (strain DSM 2475 / Hrk 5).